We begin with the raw amino-acid sequence, 454 residues long: NADH-quinone oxidoreductase subunit H (454 aa).

9 helical membrane-spanning segments follow: residues 18-38 (WWLVVVKAVFCFAFLMITVLF), 88-108 (VVYVLAPIVAAIPAFMAIAVI), 131-151 (LPIAMLYILAVASVGIYGIVL), 172-192 (MISYEIAMGAAFASVFLYSGS), 206-226 (WYIVLLPVSFVIYIVTMVGET), 256-276 (FMLAEYVNMVTVSAVSTTLFL), 296-316 (WWPMLWFVVKVQLLLFFFIWL), 328-348 (LMKLGWKVLIPVSVVWLMLVA), and 360-380 (FADIALYVGGGVLVLLLLSFV). The segment at 395–454 (AEEPAAFDPMAGGFPVPPLPGQTLPPVPRRRPRRDRELIVSGGPDTASDGPANGKEASDG) is disordered. Pro residues predominate over residues 409 to 421 (PVPPLPGQTLPPV).

This sequence belongs to the complex I subunit 1 family. NDH-1 is composed of 14 different subunits. Subunits NuoA, H, J, K, L, M, N constitute the membrane sector of the complex.

It localises to the cell membrane. The catalysed reaction is a quinone + NADH + 5 H(+)(in) = a quinol + NAD(+) + 4 H(+)(out). Functionally, NDH-1 shuttles electrons from NADH, via FMN and iron-sulfur (Fe-S) centers, to quinones in the respiratory chain. The immediate electron acceptor for the enzyme in this species is believed to be ubiquinone. Couples the redox reaction to proton translocation (for every two electrons transferred, four hydrogen ions are translocated across the cytoplasmic membrane), and thus conserves the redox energy in a proton gradient. This subunit may bind ubiquinone. This chain is NADH-quinone oxidoreductase subunit H, found in Streptomyces avermitilis (strain ATCC 31267 / DSM 46492 / JCM 5070 / NBRC 14893 / NCIMB 12804 / NRRL 8165 / MA-4680).